We begin with the raw amino-acid sequence, 50 residues long: Monellin chain B (50 aa).

As to quaternary structure, heterodimer of an A chain and a B chain.

Taste-modifying protein; intensely sweet-tasting protein. In Dioscoreophyllum cumminsii (Serendipity berry), this protein is Monellin chain B.